Consider the following 498-residue polypeptide: Lipase 3 (498 aa).

Cys60 and Cys91 form a disulfide bridge. N-linked (GlcNAc...) asparagine glycosylation occurs at Asn193. Residue Ser200 is the Acyl-ester intermediate of the active site. Asn384 carries an N-linked (GlcNAc...) asparagine glycan. Catalysis depends on His409, which acts as the Charge relay system. Asn418 carries N-linked (GlcNAc...) asparagine glycosylation.

This sequence belongs to the type-B carboxylesterase/lipase family.

It catalyses the reaction a triacylglycerol + H2O = a diacylglycerol + a fatty acid + H(+). The chain is Lipase 3 (LIP3) from Yarrowia lipolytica (strain CLIB 122 / E 150) (Yeast).